The sequence spans 298 residues: N-acetylmuramic acid 6-phosphate etherase (298 aa).

Positions 55 to 218 (IHAQVSGGGR…STGLMIKSGK (164 aa)) constitute an SIS domain. Glu83 functions as the Proton donor in the catalytic mechanism. Glu114 is a catalytic residue.

The protein belongs to the GCKR-like family. MurNAc-6-P etherase subfamily. In terms of assembly, homodimer.

The enzyme catalyses N-acetyl-D-muramate 6-phosphate + H2O = N-acetyl-D-glucosamine 6-phosphate + (R)-lactate. It participates in amino-sugar metabolism; 1,6-anhydro-N-acetylmuramate degradation. The protein operates within amino-sugar metabolism; N-acetylmuramate degradation. It functions in the pathway cell wall biogenesis; peptidoglycan recycling. In terms of biological role, specifically catalyzes the cleavage of the D-lactyl ether substituent of MurNAc 6-phosphate, producing GlcNAc 6-phosphate and D-lactate. Together with AnmK, is also required for the utilization of anhydro-N-acetylmuramic acid (anhMurNAc) either imported from the medium or derived from its own cell wall murein, and thus plays a role in cell wall recycling. This chain is N-acetylmuramic acid 6-phosphate etherase, found in Escherichia coli O157:H7 (strain EC4115 / EHEC).